Reading from the N-terminus, the 165-residue chain is uncharacterized protein (165 aa).

Residues 51 to 102 (KQAAVEPGARGGERPTGSQAGVTDTPDSAPFQRRSRAPRAREQAAQAGLNQK) are disordered. Residues 66–76 (TGSQAGVTDTP) are compositionally biased toward polar residues.

This is an uncharacterized protein from Mus musculus (Mouse).